Reading from the N-terminus, the 218-residue chain is 3,4-dihydroxy-2-butanone 4-phosphate synthase (218 aa).

D-ribulose 5-phosphate contacts are provided by residues 37 to 38 (RE), Asp-42, 150 to 154 (RGGHT), and Glu-174. Mg(2+) is bound at residue Glu-38. His-153 is a Mg(2+) binding site.

It belongs to the DHBP synthase family. As to quaternary structure, homodimer. It depends on Mg(2+) as a cofactor. Mn(2+) is required as a cofactor.

It carries out the reaction D-ribulose 5-phosphate = (2S)-2-hydroxy-3-oxobutyl phosphate + formate + H(+). Its pathway is cofactor biosynthesis; riboflavin biosynthesis; 2-hydroxy-3-oxobutyl phosphate from D-ribulose 5-phosphate: step 1/1. Catalyzes the conversion of D-ribulose 5-phosphate to formate and 3,4-dihydroxy-2-butanone 4-phosphate. The polypeptide is 3,4-dihydroxy-2-butanone 4-phosphate synthase (Erwinia tasmaniensis (strain DSM 17950 / CFBP 7177 / CIP 109463 / NCPPB 4357 / Et1/99)).